Here is a 1319-residue protein sequence, read N- to C-terminus: Son of sevenless homolog 1 (1319 aa).

The 191-residue stretch at 200–390 (TYYDLVKAFM…LNVQSGMEKI (191 aa)) folds into the DH domain. The region spanning 444 to 548 (FIMEGTLTRV…AALISLQYRS (105 aa)) is the PH domain. The region spanning 597–741 (GIPIIKAGTV…SITKIIQRKK (145 aa)) is the N-terminal Ras-GEF domain. Residues 780–1019 (HPIEIARQLT…FNKSLEIEPR (240 aa)) enclose the Ras-GEF domain. The disordered stretch occupies residues 1019 to 1101 (RHPKPLPRFP…ASGTSSNTDV (83 aa)). Residues Ser-1078 and Ser-1082 each carry the phosphoserine modification. 2 positions are modified to phosphoserine; by RPS6KA3: Ser-1120 and Ser-1147. Residues 1121–1319 (VSSISLSKGT…PPLLENAHSS (199 aa)) are disordered. Phosphoserine occurs at positions 1164, 1196, and 1215. Residues 1194–1203 (PESPPLLPPR) are compositionally biased toward pro residues. Residues 1238 to 1250 (SPSPFTPPPPQTP) show a composition bias toward pro residues. Phosphoserine is present on Ser-1261. The span at 1296–1309 (YKREHTHPSMHRDG) shows a compositional bias: basic and acidic residues.

Interacts (via C-terminus) with GRB2 (via SH3 domain). Forms a complex with phosphorylated MUC1 and GRB2 (via its SH3 domains). Interacts with phosphorylated LAT2. Interacts with NCK1 and NCK2. Part of a complex consisting of ABI1, EPS8 and SOS1. Interacts (Ser-1120 and Ser-1147 phosphorylated form) with YWHAB and YWHAE. In terms of processing, phosphorylation at Ser-1120 and Ser-1147 by RPS6KA3 create YWHAB and YWHAE binding sites and which contribute to the negative regulation of EGF-induced MAPK1/3 phosphorylation. Expressed in most embryonic and adult tissues.

Its function is as follows. Promotes the exchange of Ras-bound GDP by GTP. Probably by promoting Ras activation, regulates phosphorylation of MAP kinase MAPK3 in response to EGF. Catalytic component of a trimeric complex that participates in transduction of signals from Ras to Rac by promoting the Rac-specific guanine nucleotide exchange factor (GEF) activity. The protein is Son of sevenless homolog 1 (Sos1) of Mus musculus (Mouse).